We begin with the raw amino-acid sequence, 324 residues long: o-succinylbenzoate synthase (324 aa).

The Proton donor role is filled by Lys135. Mg(2+)-binding residues include Asp163, Glu192, and Asp215. The active-site Proton acceptor is the Lys237.

Belongs to the mandelate racemase/muconate lactonizing enzyme family. MenC type 1 subfamily. The cofactor is a divalent metal cation.

It carries out the reaction (1R,6R)-6-hydroxy-2-succinyl-cyclohexa-2,4-diene-1-carboxylate = 2-succinylbenzoate + H2O. It functions in the pathway quinol/quinone metabolism; 1,4-dihydroxy-2-naphthoate biosynthesis; 1,4-dihydroxy-2-naphthoate from chorismate: step 4/7. Its pathway is quinol/quinone metabolism; menaquinone biosynthesis. Converts 2-succinyl-6-hydroxy-2,4-cyclohexadiene-1-carboxylate (SHCHC) to 2-succinylbenzoate (OSB). The protein is o-succinylbenzoate synthase of Aliivibrio fischeri (strain MJ11) (Vibrio fischeri).